Consider the following 444-residue polypeptide: Ribosomal protein uS12 methylthiotransferase RimO (444 aa).

One can recognise an MTTase N-terminal domain in the interval 1–117 (MKVGIISLGC…ITEVISSALK (117 aa)). [4Fe-4S] cluster contacts are provided by cysteine 10, cysteine 46, cysteine 80, cysteine 154, cysteine 158, and cysteine 161. The Radical SAM core domain maps to 140–370 (YQPGPSAYIK…WEVQKEITRK (231 aa)). Residues 373–441 (EGLVGTEMRV…DYDLIGEMTN (69 aa)) form the TRAM domain.

It belongs to the methylthiotransferase family. RimO subfamily. Requires [4Fe-4S] cluster as cofactor.

The protein resides in the cytoplasm. The catalysed reaction is L-aspartate(89)-[ribosomal protein uS12]-hydrogen + (sulfur carrier)-SH + AH2 + 2 S-adenosyl-L-methionine = 3-methylsulfanyl-L-aspartate(89)-[ribosomal protein uS12]-hydrogen + (sulfur carrier)-H + 5'-deoxyadenosine + L-methionine + A + S-adenosyl-L-homocysteine + 2 H(+). Catalyzes the methylthiolation of an aspartic acid residue of ribosomal protein uS12. In Natranaerobius thermophilus (strain ATCC BAA-1301 / DSM 18059 / JW/NM-WN-LF), this protein is Ribosomal protein uS12 methylthiotransferase RimO.